Here is a 227-residue protein sequence, read N- to C-terminus: Cytochrome c oxidase subunit 2 (227 aa).

The Mitochondrial intermembrane portion of the chain corresponds to methionine 1–serine 14. Residues proline 15–methionine 45 traverse the membrane as a helical segment. Topologically, residues leucine 46–glutamine 59 are mitochondrial matrix. Residues glutamate 60 to methionine 87 form a helical membrane-spanning segment. Over aspartate 88 to leucine 227 the chain is Mitochondrial intermembrane. Residues histidine 161, cysteine 196, glutamate 198, cysteine 200, histidine 204, and methionine 207 each contribute to the Cu cation site. Glutamate 198 is a binding site for Mg(2+). Position 218 is a phosphotyrosine (tyrosine 218).

The protein belongs to the cytochrome c oxidase subunit 2 family. As to quaternary structure, component of the cytochrome c oxidase (complex IV, CIV), a multisubunit enzyme composed of 14 subunits. The complex is composed of a catalytic core of 3 subunits MT-CO1, MT-CO2 and MT-CO3, encoded in the mitochondrial DNA, and 11 supernumerary subunits COX4I, COX5A, COX5B, COX6A, COX6B, COX6C, COX7A, COX7B, COX7C, COX8 and NDUFA4, which are encoded in the nuclear genome. The complex exists as a monomer or a dimer and forms supercomplexes (SCs) in the inner mitochondrial membrane with NADH-ubiquinone oxidoreductase (complex I, CI) and ubiquinol-cytochrome c oxidoreductase (cytochrome b-c1 complex, complex III, CIII), resulting in different assemblies (supercomplex SCI(1)III(2)IV(1) and megacomplex MCI(2)III(2)IV(2)). Found in a complex with TMEM177, COA6, COX18, COX20, SCO1 and SCO2. Interacts with TMEM177 in a COX20-dependent manner. Interacts with COX20. Interacts with COX16. Requires Cu cation as cofactor.

Its subcellular location is the mitochondrion inner membrane. It catalyses the reaction 4 Fe(II)-[cytochrome c] + O2 + 8 H(+)(in) = 4 Fe(III)-[cytochrome c] + 2 H2O + 4 H(+)(out). Component of the cytochrome c oxidase, the last enzyme in the mitochondrial electron transport chain which drives oxidative phosphorylation. The respiratory chain contains 3 multisubunit complexes succinate dehydrogenase (complex II, CII), ubiquinol-cytochrome c oxidoreductase (cytochrome b-c1 complex, complex III, CIII) and cytochrome c oxidase (complex IV, CIV), that cooperate to transfer electrons derived from NADH and succinate to molecular oxygen, creating an electrochemical gradient over the inner membrane that drives transmembrane transport and the ATP synthase. Cytochrome c oxidase is the component of the respiratory chain that catalyzes the reduction of oxygen to water. Electrons originating from reduced cytochrome c in the intermembrane space (IMS) are transferred via the dinuclear copper A center (CU(A)) of subunit 2 and heme A of subunit 1 to the active site in subunit 1, a binuclear center (BNC) formed by heme A3 and copper B (CU(B)). The BNC reduces molecular oxygen to 2 water molecules using 4 electrons from cytochrome c in the IMS and 4 protons from the mitochondrial matrix. The chain is Cytochrome c oxidase subunit 2 (MT-CO2) from Bison bonasus (European bison).